Reading from the N-terminus, the 38-residue chain is Anthranilate phosphoribosyltransferase (38 aa).

The protein belongs to the anthranilate phosphoribosyltransferase family. Homodimer.

The enzyme catalyses N-(5-phospho-beta-D-ribosyl)anthranilate + diphosphate = 5-phospho-alpha-D-ribose 1-diphosphate + anthranilate. It participates in amino-acid biosynthesis; L-tryptophan biosynthesis; L-tryptophan from chorismate: step 2/5. Its function is as follows. Catalyzes the transfer of the phosphoribosyl group of 5-phosphorylribose-1-pyrophosphate (PRPP) to anthranilate to yield N-(5'-phosphoribosyl)-anthranilate (PRA). The polypeptide is Anthranilate phosphoribosyltransferase (trpD) (Serratia marcescens).